The sequence spans 129 residues: Lysozyme C (129 aa).

The 129-residue stretch at 1–129 (KVYGRCELAA…VQAWIRGCRL (129 aa)) folds into the C-type lysozyme domain. Cystine bridges form between Cys6–Cys127, Cys30–Cys115, Cys64–Cys80, and Cys76–Cys94. Active-site residues include Glu35 and Asp52.

Belongs to the glycosyl hydrolase 22 family. In terms of assembly, monomer.

The protein resides in the secreted. The enzyme catalyses Hydrolysis of (1-&gt;4)-beta-linkages between N-acetylmuramic acid and N-acetyl-D-glucosamine residues in a peptidoglycan and between N-acetyl-D-glucosamine residues in chitodextrins.. Lysozymes have primarily a bacteriolytic function; those in tissues and body fluids are associated with the monocyte-macrophage system and enhance the activity of immunoagents. In Tragopan satyra (Satyr tragopan), this protein is Lysozyme C (LYZ).